An 87-amino-acid chain; its full sequence is U3-theraphotoxin-Hhn1n (87 aa).

Positions 1-24 (MVNMKASMFLTFAGLVLLFVVCYA) are cleaved as a signal peptide. A propeptide spanning residues 25–52 (SESEEKEFPKEMLSSIFAVDNDFKQEER) is cleaved from the precursor. 3 disulfides stabilise this stretch: cysteine 54/cysteine 67, cysteine 61/cysteine 72, and cysteine 66/cysteine 79.

The protein belongs to the neurotoxin 10 (Hwtx-1) family. 51 (Hntx-8) subfamily. Hntx-8 sub-subfamily. As to expression, expressed by the venom gland.

Its subcellular location is the secreted. Its function is as follows. Weakly inhibits Kv11.1/KCNH2/ERG1, Kv1.2/KCNA2, Kv1.3/KCNA3, and Kv2.1/KCNB1. In Cyriopagopus hainanus (Chinese bird spider), this protein is U3-theraphotoxin-Hhn1n.